Consider the following 195-residue polypeptide: Interferon tau-2 (195 aa).

The N-terminal stretch at 1-23 is a signal peptide; it reads MAFVLSLLMALVLVSYGPGGSLG. Intrachain disulfides connect Cys-24/Cys-122 and Cys-52/Cys-162.

The protein belongs to the alpha/beta interferon family. IFN-alphaII subfamily. In terms of tissue distribution, constitutively and exclusively expressed in the mononuclear cells of the extraembryonic trophectoderm.

The protein localises to the secreted. Paracrine hormone primarily responsible for maternal recognition of pregnancy. Interacts with endometrial receptors, probably type I interferon receptors, and blocks estrogen receptor expression, preventing the estrogen-induced increase in oxytocin receptor expression in the endometrium. This results in the suppression of the pulsatile endometrial release of the luteolytic hormone prostaglandin F2-alpha, hindering the regression of the corpus luteum (luteolysis) and therefore a return to ovarian cyclicity. This, and a possible direct effect of IFN-tau on prostaglandin synthesis, leads in turn to continued ovarian progesterone secretion, which stimulates the secretion by the endometrium of the nutrients required for the growth of the conceptus. In summary, displays particularly high antiviral and antiproliferative potency concurrently with particular weak cytotoxicity, high antiluteolytic activity and immunomodulatory properties. In contrast with other IFNs, IFN-tau is not virally inducible. This is Interferon tau-2 (IFNT2) from Ovis aries (Sheep).